A 200-amino-acid chain; its full sequence is Rubrerythrin (200 aa).

A Ferritin-like diiron domain is found at 12 to 155 (SIKGSKTEKH…ALLAHVEDGS (144 aa)). 10 residues coordinate Fe(3+): Glu29, Glu62, Glu103, Glu106, Glu137, His140, Cys167, Cys170, Cys183, and Cys186. Residues 162-200 (EIAWQCRNCGYVITSKKAPKLCPACAHPQAYFEPMKTNY) enclose the Rubredoxin-like domain.

As to quaternary structure, homodimer. Possesses two rubredoxin-like centers and two non-sulfur oxo-bridged di-iron centers per dimer. Requires Fe(3+) as cofactor.

It is found in the cytoplasm. In terms of biological role, may provide oxidative stress protection via catalytic reduction of intracellular hydrogen peroxide. The chain is Rubrerythrin (rbr) from Porphyromonas gingivalis (strain ATCC BAA-308 / W83).